A 520-amino-acid polypeptide reads, in one-letter code: Cytochrome P450 315a1, mitochondrial (520 aa).

A heme-binding site is contributed by Cys466.

It belongs to the cytochrome P450 family. Heme serves as cofactor. Complex coexpression pattern of dib (disembodied) and sad (shade) in the early embryo that restricts to the prothoracic gland cells of the developing ring gland during late embryogenesis. In larvae and adult, coexpression is seen in prothoracic gland and follicle cells of the ovary. In adults, coexpression is seen in the follicle cells, sad only is expressed in nurse cells.

Its subcellular location is the mitochondrion membrane. The enzyme catalyses 2-deoxyecdysone + 2 reduced [adrenodoxin] + O2 + 2 H(+) = ecdysone + 2 oxidized [adrenodoxin] + H2O. The catalysed reaction is 2,22-dideoxyecdysone + 2 reduced [adrenodoxin] + O2 + 2 H(+) = 22-deoxyecdysone + 2 oxidized [adrenodoxin] + H2O. The protein operates within steroid biosynthesis; ecdysteroid biosynthesis. In terms of biological role, required for CNS development: midline glial cells. Involved in the metabolism of insect hormones: responsible for ecdysteroid C2-hydroxylase activity. May be involved in the breakdown of synthetic insecticides. In Drosophila melanogaster (Fruit fly), this protein is Cytochrome P450 315a1, mitochondrial.